The sequence spans 300 residues: Probable protein phosphatase 2C 3 (300 aa).

Residues 23-298 (IFAASEMQGW…DNMTTILVYL (276 aa)) enclose the PPM-type phosphatase domain. The Mn(2+) site is built by aspartate 57, glycine 58, aspartate 237, and aspartate 289.

This sequence belongs to the PP2C family. It depends on Mg(2+) as a cofactor. The cofactor is Mn(2+).

It localises to the membrane. It carries out the reaction O-phospho-L-seryl-[protein] + H2O = L-seryl-[protein] + phosphate. The enzyme catalyses O-phospho-L-threonyl-[protein] + H2O = L-threonyl-[protein] + phosphate. Enzyme with a broad specificity. This Paramecium tetraurelia protein is Probable protein phosphatase 2C 3.